A 432-amino-acid polypeptide reads, in one-letter code: Teosinte glume architecture 1 (432 aa).

2 disordered regions span residues 20-55 (HAAAAPSSGGHAANAAAAGTGTESRPPAPGAAGAPA) and 68-102 (ECEPGAARREREAAAGAAKRPRPAGPGGQQQQQQC). Positions 22-41 (AAAPSSGGHAANAAAAGTGT) are enriched in low complexity. Residues 102-179 (CPSCAVDGCR…DGHNRRRRKP (78 aa)) form an SBP-type zinc finger. Residues Cys105, Cys110, Cys127, His130, Cys146, Cys149, His153, and Cys165 each contribute to the Zn(2+) site. Over residues 409-420 (GGGSGGGEGSSD) the composition is skewed to gly residues. A disordered region spans residues 409-432 (GGGSGGGEGSSDGGTSSSMPFSWQ).

As to quaternary structure, monomer and homodimer. Strongly expressed in immature ears and weakly in husks. Found in the inflorescence meristem of the developing ear, in the spikelet pair primordia, the glume primordia, the cupule forming region and other floral organs. Not detected in other tissues.

Its function is as follows. SBP transcriptional regulator probably involved in the domestication of maize. Acts as a transcriptional repressor binding to a 5'-GTAC-3' motif. May repress the growth of lateral branches in length and numbers. In Zea mays (Maize), this protein is Teosinte glume architecture 1.